The following is a 232-amino-acid chain: uncharacterized protein (232 aa).

This is an uncharacterized protein from Homo sapiens (Human).